Here is a 248-residue protein sequence, read N- to C-terminus: Clathrin light chain A (248 aa).

Positions 1–92 (MAELDPFGAP…YYQESNGPTD (92 aa)) are disordered. The segment covering 13–25 (APGGPALGNGVAG) has biased composition (gly residues). Residues 61–71 (GPQPHGEPPGG) are compositionally biased toward pro residues. The tract at residues 100-162 (VDRLQSEPES…QLQKTKANNR (63 aa)) is involved in binding clathrin heavy chain. Residues S105 and S206 each carry the phosphoserine modification. At K223 the chain carries N6-acetyllysine. S236 is modified (phosphoserine). K242 bears the N6-acetyllysine mark.

The protein belongs to the clathrin light chain family. Clathrin coats are formed from molecules containing 3 heavy chains and 3 light chains. Interacts with CALY; the interaction stimulates clathrin self-assembly and clathrin-mediated endocytosis. Interacts with CKAP5 and TACC3 forming the TACC3/ch-TOG/clathrin complex located at spindle inter-microtubules bridges; the complex implicates clathrin triskelions.

The protein resides in the cytoplasmic vesicle membrane. Its subcellular location is the membrane. It localises to the coated pit. The protein localises to the cytoplasm. It is found in the cytoskeleton. The protein resides in the spindle. In terms of biological role, clathrin is the major protein of the polyhedral coat of coated pits and vesicles. Acts as a component of the TACC3/ch-TOG/clathrin complex proposed to contribute to stabilization of kinetochore fibers of the mitotic spindle by acting as inter-microtubule bridge. The polypeptide is Clathrin light chain A (CLTA) (Homo sapiens (Human)).